The following is a 137-amino-acid chain: Basic phospholipase A2 2 (137 aa).

An N-terminal signal peptide occupies residues leucine 1 to alanine 11. Residues alanine 12–leucine 19 constitute a propeptide that is removed on maturation. Disulfide bonds link cysteine 30/cysteine 89, cysteine 44/cysteine 136, cysteine 46/cysteine 62, cysteine 61/cysteine 117, cysteine 68/cysteine 110, cysteine 78/cysteine 103, and cysteine 96/cysteine 108. Ca(2+)-binding residues include tyrosine 45 and glycine 47. Tyrosine 48 is a binding site for alpha-D-mannopyranose. Position 49 (glycine 49) interacts with Ca(2+). Residue histidine 65 is part of the active site. Aspartate 66 contributes to the Ca(2+) binding site. Aspartate 66 contacts alpha-D-mannopyranose. The active site involves aspartate 111.

It belongs to the phospholipase A2 family. Group I subfamily. D49 sub-subfamily. In terms of assembly, homodimer; non-covalently linked. Ca(2+) serves as cofactor. In terms of processing, homodimerization and interaction of the catalytically important Asp-49 (here Asp-111) with mannose molecules may render this protein inactive. In terms of tissue distribution, expressed by the venom gland.

The protein resides in the secreted. The catalysed reaction is a 1,2-diacyl-sn-glycero-3-phosphocholine + H2O = a 1-acyl-sn-glycero-3-phosphocholine + a fatty acid + H(+). In terms of biological role, snake venom phospholipase A2 (PLA2) that shows anticoagulant and neurotoxic activities. Its function is as follows. PLA2 catalyzes the calcium-dependent hydrolysis of the 2-acyl groups in 3-sn-phosphoglycerides. This Bungarus caeruleus (Indian krait) protein is Basic phospholipase A2 2.